The chain runs to 884 residues: Probable mixed-linked glucan synthase 9 (884 aa).

The span at Met-1–Pro-27 shows a compositional bias: low complexity. The interval Met-1–Gly-34 is disordered. The next 2 membrane-spanning stretches (helical) occupy residues Val-73–Leu-93 and Ala-104–Leu-124. Asp-195 is an active-site residue. Substrate contacts are provided by Asp-396 and Asp-398. The active site involves Asp-565. Helical transmembrane passes span Thr-640 to Leu-660, Phe-672 to Val-692, Glu-708 to Leu-728, Leu-765 to Gly-785, Ala-802 to Met-822, and Cys-830 to Val-850.

The protein belongs to the glycosyltransferase 2 family. Plant cellulose synthase-like F subfamily.

Its subcellular location is the golgi apparatus membrane. May catalyze both beta-1,3 and beta-1,4 glycosidic linkage on beta-D-glucan. Essential for (1,3;1,4)-beta-D-glucans synthesis in grasses and cereals (Poaceae). The mixed-linked glucans (which are not present in walls of dicotyledons or most other monocotyledonous plants) are particularly important constituents of the walls of the starchy endosperm and aleurone cells of cereal grains such as oats, wheat, rice and barley. They can account for up to 70% by weight of the wall. The polypeptide is Probable mixed-linked glucan synthase 9 (CSLF9) (Oryza sativa subsp. japonica (Rice)).